The chain runs to 98 residues: NADH-ubiquinone oxidoreductase chain 4L (98 aa).

3 helical membrane-spanning segments follow: residues 1–21 (MTPVHFSFSSAFILGLMGLAF), 29–49 (ALLCLEGMMLSLFIALALWAL), and 59–79 (APMLLLAFSACEASTGLALLV).

Belongs to the complex I subunit 4L family.

The protein localises to the mitochondrion membrane. The catalysed reaction is a ubiquinone + NADH + 5 H(+)(in) = a ubiquinol + NAD(+) + 4 H(+)(out). Core subunit of the mitochondrial membrane respiratory chain NADH dehydrogenase (Complex I) which catalyzes electron transfer from NADH through the respiratory chain, using ubiquinone as an electron acceptor. Part of the enzyme membrane arm which is embedded in the lipid bilayer and involved in proton translocation. The polypeptide is NADH-ubiquinone oxidoreductase chain 4L (MT-ND4L) (Carassius auratus (Goldfish)).